Reading from the N-terminus, the 508-residue chain is GMP synthase [glutamine-hydrolyzing] (508 aa).

Positions 1-189 constitute a Glutamine amidotransferase type-1 domain; the sequence is MILVLDFGSQ…ALLVCGCEKT (189 aa). Catalysis depends on Cys78, which acts as the Nucleophile. Residues His163 and Glu165 contribute to the active site. One can recognise a GMPS ATP-PPase domain in the interval 190 to 383; it reads WGMQHFAQRE…LGVSQDFLMR (194 aa). Residue 217-223 participates in ATP binding; it reads SGGVDST.

As to quaternary structure, homodimer.

The enzyme catalyses XMP + L-glutamine + ATP + H2O = GMP + L-glutamate + AMP + diphosphate + 2 H(+). Its pathway is purine metabolism; GMP biosynthesis; GMP from XMP (L-Gln route): step 1/1. Functionally, catalyzes the synthesis of GMP from XMP. The protein is GMP synthase [glutamine-hydrolyzing] (guaA) of Helicobacter pylori (strain ATCC 700392 / 26695) (Campylobacter pylori).